The primary structure comprises 390 residues: MQEARRIRELPPYLFARIEKKIAEARERGVDIISLGIGDPDMPTPSHVIDKLVAEAHNPENHRYPTSEGLLAFRQAVADWYQRLYGVDLDPRREVVTLIGSKEGIAHISLCYVDPGDINLVPDPGYPVYNIGTLLAGGESYFMPLTAANGFLPDLGAIPSDVARRAKLMFINYPNNPTGAVADLKFFQEVVEFARSYDLIVCHDAAYSEITYDGYRAPSFLQAPGAKEVGIEFNSVSKPYNMTGWRLGWACGRADVIEALARIKSNIDSGAFQAVQYAGIAALTGPQEGLAEVRRVYQERRDIIVEGFNSLGWHLEKPKATFYVWAPVPRGYTSASFAEMVLEKAGVIITPGNGYGNYGEGYFRIALTISKERMQEAIERLRRVLGKVEF.

Positions 13, 38, 102, 126, and 176 each coordinate substrate. Pyridoxal 5'-phosphate is bound by residues 101–102, tyrosine 126, asparagine 176, tyrosine 207, and 235–237; these read SK and SVS. Residue lysine 238 is modified to N6-(pyridoxal phosphate)lysine. A pyridoxal 5'-phosphate-binding site is contributed by arginine 246. Arginine 364 contacts substrate.

It belongs to the class-I pyridoxal-phosphate-dependent aminotransferase family. LL-diaminopimelate aminotransferase subfamily. In terms of assembly, homodimer. Pyridoxal 5'-phosphate is required as a cofactor.

It carries out the reaction (2S,6S)-2,6-diaminopimelate + 2-oxoglutarate = (S)-2,3,4,5-tetrahydrodipicolinate + L-glutamate + H2O + H(+). The protein operates within amino-acid biosynthesis; L-lysine biosynthesis via DAP pathway; LL-2,6-diaminopimelate from (S)-tetrahydrodipicolinate (aminotransferase route): step 1/1. Functionally, involved in the synthesis of meso-diaminopimelate (m-DAP or DL-DAP), required for both lysine and peptidoglycan biosynthesis. Catalyzes the direct conversion of tetrahydrodipicolinate to LL-diaminopimelate. Is also able to catalyze the reverse reaction in vitro, i.e. the transamination of LL-diaminopimelate with 2-oxoglutarate to produce tetrahydrodipicolinate and glutamate. Can also use m-DAP instead of LL-DAP as the amino-group donor, and oxaloacetate instead of 2-oxoglutarate as the amino-group acceptor. This Moorella thermoacetica (strain ATCC 39073 / JCM 9320) protein is LL-diaminopimelate aminotransferase.